We begin with the raw amino-acid sequence, 413 residues long: Serine hydroxymethyltransferase (413 aa).

(6S)-5,6,7,8-tetrahydrofolate is bound by residues L117 and 121–123 (GHL). K226 carries the N6-(pyridoxal phosphate)lysine modification. Residue 349–351 (SPF) coordinates (6S)-5,6,7,8-tetrahydrofolate.

This sequence belongs to the SHMT family. As to quaternary structure, homodimer. Pyridoxal 5'-phosphate is required as a cofactor.

It is found in the cytoplasm. It catalyses the reaction (6R)-5,10-methylene-5,6,7,8-tetrahydrofolate + glycine + H2O = (6S)-5,6,7,8-tetrahydrofolate + L-serine. The protein operates within one-carbon metabolism; tetrahydrofolate interconversion. Its pathway is amino-acid biosynthesis; glycine biosynthesis; glycine from L-serine: step 1/1. Functionally, catalyzes the reversible interconversion of serine and glycine with tetrahydrofolate (THF) serving as the one-carbon carrier. This reaction serves as the major source of one-carbon groups required for the biosynthesis of purines, thymidylate, methionine, and other important biomolecules. Also exhibits THF-independent aldolase activity toward beta-hydroxyamino acids, producing glycine and aldehydes, via a retro-aldol mechanism. The polypeptide is Serine hydroxymethyltransferase (Pelobacter propionicus (strain DSM 2379 / NBRC 103807 / OttBd1)).